We begin with the raw amino-acid sequence, 342 residues long: Porphobilinogen deaminase (342 aa).

An S-(dipyrrolylmethanemethyl)cysteine modification is found at Cys-249. A disordered region spans residues 323-342; it reads AAAKQGAAEDGAADSAATGE.

It belongs to the HMBS family. Monomer. It depends on dipyrromethane as a cofactor.

It carries out the reaction 4 porphobilinogen + H2O = hydroxymethylbilane + 4 NH4(+). It participates in porphyrin-containing compound metabolism; protoporphyrin-IX biosynthesis; coproporphyrinogen-III from 5-aminolevulinate: step 2/4. In terms of biological role, tetrapolymerization of the monopyrrole PBG into the hydroxymethylbilane pre-uroporphyrinogen in several discrete steps. The chain is Porphobilinogen deaminase from Paraburkholderia phytofirmans (strain DSM 17436 / LMG 22146 / PsJN) (Burkholderia phytofirmans).